We begin with the raw amino-acid sequence, 348 residues long: D-alanine--D-alanine ligase (348 aa).

The 203-residue stretch at 132 to 334 folds into the ATP-grasp domain; the sequence is KRVLESAGIP…YAELIEELVR (203 aa). ATP is bound at residue 162–217; sequence EAALSYPVFVKPANMGSSVGISKAESEEELRAAILLALTYDSRILIEQGVLAREIE. Positions 288, 301, and 303 each coordinate Mg(2+).

The protein belongs to the D-alanine--D-alanine ligase family. Mg(2+) is required as a cofactor. The cofactor is Mn(2+).

The protein resides in the cytoplasm. It catalyses the reaction 2 D-alanine + ATP = D-alanyl-D-alanine + ADP + phosphate + H(+). Its pathway is cell wall biogenesis; peptidoglycan biosynthesis. Its function is as follows. Cell wall formation. The sequence is that of D-alanine--D-alanine ligase from Streptococcus equi subsp. zooepidemicus (strain H70).